Reading from the N-terminus, the 205-residue chain is MRGYFIVLEGIDGSGKTTQAKLLAEWFEDKGYEVLLTKEPTDSELGKLIRRIILEESVIDGSKISYEAEALLFAADRAEHVKKIILPALSEGKVVICDRYFYSSLAYQWARGLDLNWLIQVNSFAPRPDLAILLDLPVKESLRRIKLRGTLTEFDKIVELQRKVRHNYLKLAEMFPEMRIVNALSSIEDIHSDIVALVKHELLGL.

10–17 (GIDGSGKT) contacts ATP.

The protein belongs to the thymidylate kinase family.

It catalyses the reaction dTMP + ATP = dTDP + ADP. The sequence is that of Probable thymidylate kinase (tmk) from Pyrococcus horikoshii (strain ATCC 700860 / DSM 12428 / JCM 9974 / NBRC 100139 / OT-3).